Consider the following 81-residue polypeptide: Neuronatin (81 aa).

It belongs to the neuronatin family.

May participate in the maintenance of segment identity in the hindbrain and pituitary development, and maturation or maintenance of the overall structure of the nervous system. May function as a regulatory subunit of ion channels. The protein is Neuronatin (NNAT) of Sus scrofa (Pig).